The chain runs to 901 residues: HTH-type transcriptional regulator MalT (901 aa).

39-46 serves as a coordination point for ATP; sequence SPAGYGKT. The region spanning 829–894 is the HTH luxR-type domain; sequence ELIRTSPLTQ…DAVQHAQQLL (66 aa). The segment at residues 853 to 872 is a DNA-binding region (H-T-H motif); it reads NEQIAGELDVAATTIKTHIR.

This sequence belongs to the MalT family. As to quaternary structure, monomer in solution. Oligomerizes to an active state in the presence of the positive effectors ATP and maltotriose.

Its activity is regulated as follows. Activated by ATP and maltotriose, which are both required for DNA binding. In terms of biological role, positively regulates the transcription of the maltose regulon whose gene products are responsible for uptake and catabolism of malto-oligosaccharides. Specifically binds to the promoter region of its target genes, recognizing a short DNA motif called the MalT box. The protein is HTH-type transcriptional regulator MalT of Klebsiella pneumoniae subsp. pneumoniae (strain ATCC 700721 / MGH 78578).